We begin with the raw amino-acid sequence, 188 residues long: Ion-translocating oxidoreductase complex subunit G (188 aa).

At 1–9 the chain is on the cytoplasmic side; that stretch reads MSDSKEITK. The chain crosses the membrane as a helical span at residues 10–30; that stretch reads VIVTMVVISAVAAALLALTYT. The Extracellular portion of the chain corresponds to 31-188; it reads PTQAQLKLLQ…AVDYVSAQEG (158 aa). Residue threonine 166 is modified to FMN phosphoryl threonine.

It belongs to the RnfG family. As to quaternary structure, the Rnf complex is probably composed of eight subunits, including RnfA, RnfB, RnfC, RnfD, RnfE and RnfG. FMN is required as a cofactor.

The protein resides in the cell membrane. Part of a membrane-bound complex that couples electron transfer with translocation of ions across the membrane. Catalyzes Na(+) transport, most probably coupled to electron transfer from reduced ferredoxin to methanophenazine and heterodisulfide reductase. Involved in heterodisulfide reduction during methanogenesis from acetate. This is Ion-translocating oxidoreductase complex subunit G from Methanosarcina acetivorans (strain ATCC 35395 / DSM 2834 / JCM 12185 / C2A).